The primary structure comprises 751 residues: Protein CLMP1 (751 aa).

A compositionally biased stretch (basic residues) spans 1-11 (MGKSGGRKKKS). Residues 1–33 (MGKSGGRKKKSGGSNSNSSQVNSSETSGLSKPS) form a disordered region. Positions 12–28 (GGSNSNSSQVNSSETSG) are enriched in low complexity. 3 TPR repeats span residues 51-84 (AHEL…IPKS), 89-124 (AVFH…QPGF), and 125-158 (TRAL…DPNH). Residues 290 to 382 (WRPLKFVYDH…GMLRLHVVDV (93 aa)) form the PB1 domain. Positions 386–443 (QEPMLLEEEEEEVEEKPVIEEVISSPTESLSETEINTEKTDKEVEKEKASSSEDPETK) are disordered. A compositionally biased stretch (acidic residues) spans 390-399 (LLEEEEEEVE). The span at 409 to 419 (SSPTESLSETE) shows a compositional bias: polar residues. Over residues 421-443 (NTEKTDKEVEKEKASSSEDPETK) the composition is skewed to basic and acidic residues. 3 TPR repeats span residues 434–468 (ASSS…DPDA), 481–514 (SEAL…AFFN), and 536–570 (EVVA…KPDF). The segment covering 630-648 (EQRMDDLKNPNSNKKEEVS) has biased composition (basic and acidic residues). A disordered region spans residues 630 to 663 (EQRMDDLKNPNSNKKEEVSKRRKKQGGDGNEEVS).

Interacts with myosin XI-K. Expressed in roots, stems, leaves, apex, flowers and seeds. Detected throughout the petiole in juvenile and young leaves, but restricted to the petiole midvein in older leaves. Expressed in hydathodes, at the base of the trichome, in the vascular cylinder of primary root and lateral root, in emerging lateral root primordia, in pollen and in developing embryos, but not in mature embryos.

It localises to the cytoplasm. In terms of biological role, required for plastid separation and partitioning during cell division. Not involved in plastid constriction or in the organization of cytoplasmic actin cables. Contributes to polar growth of root hairs. This is Protein CLMP1 from Arabidopsis thaliana (Mouse-ear cress).